A 178-amino-acid polypeptide reads, in one-letter code: Gamma-crystallin S (178 aa).

Ser-2 is modified (N-acetylserine). The N-terminal arm stretch occupies residues 2 to 5 (SKTG). Beta/gamma crystallin 'Greek key' domains follow at residues 6-44 (GKISFYEDRNFQGRRYDCDCDCADFRSYLSRCNSIRVEG) and 45-87 (GTWA…RAVH). Residues 88–93 (LSSGGQ) form a connecting peptide region. Beta/gamma crystallin 'Greek key' domains follow at residues 94–134 (AKIQ…KVVE) and 135–177 (GTWI…RRIV).

It belongs to the beta/gamma-crystallin family. As to quaternary structure, monomer.

Crystallins are the dominant structural components of the vertebrate eye lens. The protein is Gamma-crystallin S (Crygs) of Mus musculus (Mouse).